Consider the following 304-residue polypeptide: tRNA dimethylallyltransferase (304 aa).

ATP is bound at residue 8–15; it reads GPTASGKS. A substrate-binding site is contributed by 10 to 15; that stretch reads TASGKS. Residues 33-36 form an interaction with substrate tRNA region; it reads DSRQ.

The protein belongs to the IPP transferase family. In terms of assembly, monomer. The cofactor is Mg(2+).

It catalyses the reaction adenosine(37) in tRNA + dimethylallyl diphosphate = N(6)-dimethylallyladenosine(37) in tRNA + diphosphate. Functionally, catalyzes the transfer of a dimethylallyl group onto the adenine at position 37 in tRNAs that read codons beginning with uridine, leading to the formation of N6-(dimethylallyl)adenosine (i(6)A). The protein is tRNA dimethylallyltransferase of Chlorobium luteolum (strain DSM 273 / BCRC 81028 / 2530) (Pelodictyon luteolum).